Consider the following 70-residue polypeptide: Large ribosomal subunit protein uL29 (70 aa).

Belongs to the universal ribosomal protein uL29 family.

The sequence is that of Large ribosomal subunit protein uL29 from Prochlorococcus marinus (strain MIT 9211).